Here is a 208-residue protein sequence, read N- to C-terminus: 3-demethoxyubiquinol 3-hydroxylase (208 aa).

Fe cation is bound by residues Glu-57, Glu-87, His-90, Glu-139, Glu-171, and His-174.

The protein belongs to the COQ7 family. Fe cation serves as cofactor.

Its subcellular location is the cell membrane. The catalysed reaction is a 5-methoxy-2-methyl-3-(all-trans-polyprenyl)benzene-1,4-diol + AH2 + O2 = a 3-demethylubiquinol + A + H2O. Its pathway is cofactor biosynthesis; ubiquinone biosynthesis. Functionally, catalyzes the hydroxylation of 2-nonaprenyl-3-methyl-6-methoxy-1,4-benzoquinol during ubiquinone biosynthesis. The protein is 3-demethoxyubiquinol 3-hydroxylase of Verminephrobacter eiseniae (strain EF01-2).